The primary structure comprises 171 residues: Ribosome maturation factor RimP (171 aa).

This sequence belongs to the RimP family.

The protein resides in the cytoplasm. Required for maturation of 30S ribosomal subunits. In Anaeromyxobacter sp. (strain K), this protein is Ribosome maturation factor RimP.